The sequence spans 1076 residues: Ribosome quality control complex subunit NEMF (1076 aa).

T7 is modified (phosphothreonine). Positions 296–359 form a coiled coil; sequence VDEFYSKIEG…LIEMNLQIVD (64 aa). Residue S417 is modified to Phosphoserine. The disordered stretch occupies residues 420–453; it reads EDDDVDGDVNVEKNETEPPKGKKKKQKNKQLQKP. Basic and acidic residues predominate over residues 429-439; sequence NVEKNETEPPK. Positions 440 to 449 are enriched in basic residues; sequence GKKKKQKNKQ. Residues 483-514 are a coiled coil; the sequence is AAKKTQKTVEAAEKAFKSAEKKTKQTLKEVQT. Acidic residues-rich tracts occupy residues 691–710 and 742–754; these read ISEEMEQLDGGDTSSDEDKE and LIQEESSEDEGEY. Disordered regions lie at residues 691–715 and 742–972; these read ISEEMEQLDGGDTSSDEDKEEHETP and LIQE…DLDQ. Residues S747, S748, and S763 each carry the phosphoserine modification. The segment covering 755 to 768 has biased composition (basic and acidic residues); it reads EEVRKDQDSVGEMK. Polar residues predominate over residues 777 to 795; sequence YPDTTIDLSHLQPQRSIQK. S831 is modified (phosphoserine). A compositionally biased stretch (basic and acidic residues) spans 839–854; the sequence is LEGKDKEKESTVHIET. Residues 869 to 894 adopt a coiled-coil conformation; the sequence is KRGQKSKMKKMKEKYKDQDEEDRELI. The span at 870–881 shows a compositional bias: basic residues; that stretch reads RGQKSKMKKMKE. Over residues 937-965 the composition is skewed to basic and acidic residues; it reads DNIKKETPFLEVITHELQDFAVDDPHDDK.

The protein belongs to the NEMF family. Component of the ribosome quality control complex (RQC), composed of the E3 ubiquitin ligase LTN1, TCF25 and NEMF associated with the 60S ribosomal subunit. The complex probably also contains VCP/p97 and its ubiquitin-binding cofactors. Interacts (via its N-terminus) with XPO1. In terms of tissue distribution, expressed in brain, heart, liver, lung, spleen, and skeletal muscle. Also expressed at lower levels in stomach and testis.

It is found in the cytoplasm. The protein localises to the cytosol. The protein resides in the nucleus. Its function is as follows. Key component of the ribosome quality control complex (RQC), a ribosome-associated complex that mediates the extraction of incompletely synthesized nascent chains from stalled ribosomes as well as their ubiquitin-mediated proteasomal degradation. Thereby, frees 60S subunit ribosomes from the stalled translation complex and prevents the accumulation of nascent polypeptide chains that are potentially toxic for the cell. Within the RQC complex, NEMF specifically binds stalled 60S ribosomal subunits by recognizing an exposed, nascent chain-conjugated tRNA moiety and promotes the recruitment of LTN1 to stalled 60S subunits. Following binding to stalled 60S ribosomal subunits, NEMF mediates CAT tailing by recruiting alanine-charged tRNA to the A-site and directing the elongation of stalled nascent chains independently of mRNA or 40S subunits, leading to non-templated C-terminal alanine extensions (CAT tails). Mainly recruits alanine-charged tRNAs, but can also other amino acid-charged tRNAs. CAT tailing is required to promote ubiquitination of stalled nascent chains by different E3 ubiquitin-protein ligases. In the canonical RQC pathway (RQC-L), CAT tailing facilitates LTN1-dependent ubiquitination by exposing lysine residues that would otherwise remain buried in the ribosomal exit tunnel. In the alternative RQC pathway (RQC-C) CAT tailing creates an C-degron mainly composed of alanine that is recognized by the CRL2(KLHDC10) and RCHY1/PIRH2 E3 ligases, leading to ubiquitination and degradation of stalled nascent chains. NEMF may also indirectly play a role in nuclear export. In Homo sapiens (Human), this protein is Ribosome quality control complex subunit NEMF.